The sequence spans 68 residues: ATP synthase subunit c (68 aa).

A run of 2 helical transmembrane segments spans residues 5-25 and 47-67; these read AAAI…GMIV and FIGV…AFMV.

Belongs to the ATPase C chain family. F-type ATPases have 2 components, F(1) - the catalytic core - and F(0) - the membrane proton channel. F(1) has five subunits: alpha(3), beta(3), gamma(1), delta(1), epsilon(1). F(0) has three main subunits: a(1), b(2) and c(10-14). The alpha and beta chains form an alternating ring which encloses part of the gamma chain. F(1) is attached to F(0) by a central stalk formed by the gamma and epsilon chains, while a peripheral stalk is formed by the delta and b chains.

It localises to the cell membrane. Functionally, f(1)F(0) ATP synthase produces ATP from ADP in the presence of a proton or sodium gradient. F-type ATPases consist of two structural domains, F(1) containing the extramembraneous catalytic core and F(0) containing the membrane proton channel, linked together by a central stalk and a peripheral stalk. During catalysis, ATP synthesis in the catalytic domain of F(1) is coupled via a rotary mechanism of the central stalk subunits to proton translocation. In terms of biological role, key component of the F(0) channel; it plays a direct role in translocation across the membrane. A homomeric c-ring of between 10-14 subunits forms the central stalk rotor element with the F(1) delta and epsilon subunits. The protein is ATP synthase subunit c of Oceanobacillus iheyensis (strain DSM 14371 / CIP 107618 / JCM 11309 / KCTC 3954 / HTE831).